An 84-amino-acid chain; its full sequence is Large ribosomal subunit protein bL27 (84 aa).

Residues Met-1–Gly-22 form a disordered region.

The protein belongs to the bacterial ribosomal protein bL27 family.

This Shewanella amazonensis (strain ATCC BAA-1098 / SB2B) protein is Large ribosomal subunit protein bL27.